Reading from the N-terminus, the 546-residue chain is Methionine--tRNA ligase (546 aa).

The 'HIGH' region signature appears at Pro-15–His-25. Positions 146, 149, 159, and 162 each coordinate Zn(2+). The short motif at Lys-332–Ser-336 is the 'KMSKS' region element. Lys-335 lines the ATP pocket.

The protein belongs to the class-I aminoacyl-tRNA synthetase family. MetG type 1 subfamily. In terms of assembly, monomer. Zn(2+) serves as cofactor.

Its subcellular location is the cytoplasm. The catalysed reaction is tRNA(Met) + L-methionine + ATP = L-methionyl-tRNA(Met) + AMP + diphosphate. Is required not only for elongation of protein synthesis but also for the initiation of all mRNA translation through initiator tRNA(fMet) aminoacylation. This Coxiella burnetii (strain RSA 331 / Henzerling II) protein is Methionine--tRNA ligase.